Here is a 418-residue protein sequence, read N- to C-terminus: MKAEIIAVGTEILTGQIVNTNAQFLSEKLAEIGVDVYFQTAVGDNEVRLLSLLEIASQRSSLVILTGGLGPTEDDLTKQTLAKFLGKALVFDPQAQEKLDIFFALRPDYARTPNNERQAQIVEGAIPLPNETGLAVGGKLEVDGVTYVVLPGPPSELKPMVLNQLLPKLMTGSKLYSRVLRFFGIGESQLVTILADLIDNQIDPTLAPYAKTGEVTLRLSTKASSQEEANQALDILENQILDCQTFEGISLRDFCYGYGEETSLASIVVEELKRQGKTIAAAESLTAGLFQATVTNFSEVSSIFKSGFVTYSLEEKSRMLDIPAKNLEEHGVVSEFTAQKMAEQARSKTQSDFGISLTGVAGPDSLEGHPVGTVFIGLAQEQGTEVIKVNIGGRSRADVRHIAVMHAFNLVRKALLSD.

The protein belongs to the CinA family.

This is Putative competence-damage inducible protein from Streptococcus pneumoniae (strain CGSP14).